We begin with the raw amino-acid sequence, 313 residues long: Intelectin-like protein (313 aa).

The region spanning 33–251 (TSCCSQTSPG…NNEKAPMALC (219 aa)) is the Fibrinogen C-terminal domain. Residues His-86, Glu-87, Asn-89, Gly-92, Gly-97, Asp-98, and Asp-133 each contribute to the Ca(2+) site. Cystine bridges form between Cys-94-Cys-280, Cys-199-Cys-259, and Cys-251-Cys-265. Positions 260, 262, 274, and 282 each coordinate Ca(2+). Residues 262–263 (EH) and Glu-274 contribute to the a carbohydrate site.

As to quaternary structure, monomer, homodimer, homotrimer and homotetramer. Mostly monomeric or dimeric.

It is found in the secreted. Functionally, binds mannan, mannose and, to a lesser degree, D-lactose, N-acetylgalactosamine, N-acetylglucosamine and beta-D-glucose. The chain is Intelectin-like protein from Alligator mississippiensis (American alligator).